Consider the following 404-residue polypeptide: tRNA/tmRNA (uracil-C(5))-methyltransferase (404 aa).

Residues Gln218, Tyr251, Asn256, Glu272, and Asp332 each contribute to the S-adenosyl-L-methionine site. The Nucleophile role is filled by Cys358. The active-site Proton acceptor is the Glu392.

Belongs to the class I-like SAM-binding methyltransferase superfamily. RNA M5U methyltransferase family. TrmA subfamily.

It catalyses the reaction uridine(54) in tRNA + S-adenosyl-L-methionine = 5-methyluridine(54) in tRNA + S-adenosyl-L-homocysteine + H(+). The catalysed reaction is uridine(341) in tmRNA + S-adenosyl-L-methionine = 5-methyluridine(341) in tmRNA + S-adenosyl-L-homocysteine + H(+). Dual-specificity methyltransferase that catalyzes the formation of 5-methyluridine at position 54 (m5U54) in all tRNAs, and that of position 341 (m5U341) in tmRNA (transfer-mRNA). This Helicobacter hepaticus (strain ATCC 51449 / 3B1) protein is tRNA/tmRNA (uracil-C(5))-methyltransferase.